The sequence spans 427 residues: MSNNQILFERAQKTIPGGVNSPVRAFRSVGGTPRFVARAQGPYFWDADGKQYIDYIGSWGPMIVGHVHPEVLSAVQNVLADGFSFGAPTEAEIEIAEEICKLVPSIEQVRMVSSGTEATMSALRLARGFTGRSRIVKFEGCYHGHADSLLVKAGSGLLTFGNPTSAGVPADIAKHTTVLEYNNVAALEEAFGAFGDEIAAVIVEPVAGNMNLVRGTPEFLNALRALCTKHGAVLIFDEVMCGFRVALGGAQQHYGITADLTCLGKVIGGGMPAAAFGGRRDIMAHLAPLGGVYQAGTLSGNPIAVAAGLKTLQLIQAPGFYDALTAQTKRLADGLAAEARAAGVPFVADSIGAMFGLYFTERVPTSFAEVTKSDTERFNRFFHLMLDEGVYFAPSAYEAGFVSSTHDDAVIDATLAAARRAFAALAA.

At lysine 265 the chain carries N6-(pyridoxal phosphate)lysine.

The protein belongs to the class-III pyridoxal-phosphate-dependent aminotransferase family. HemL subfamily. Homodimer. Pyridoxal 5'-phosphate is required as a cofactor.

The protein localises to the cytoplasm. The catalysed reaction is (S)-4-amino-5-oxopentanoate = 5-aminolevulinate. Its pathway is porphyrin-containing compound metabolism; protoporphyrin-IX biosynthesis; 5-aminolevulinate from L-glutamyl-tRNA(Glu): step 2/2. This chain is Glutamate-1-semialdehyde 2,1-aminomutase, found in Burkholderia lata (strain ATCC 17760 / DSM 23089 / LMG 22485 / NCIMB 9086 / R18194 / 383).